A 398-amino-acid polypeptide reads, in one-letter code: Probable aminomethyltransferase (398 aa).

It belongs to the GcvT family. In terms of assembly, the glycine cleavage system is composed of four proteins: P, T, L and H.

The enzyme catalyses N(6)-[(R)-S(8)-aminomethyldihydrolipoyl]-L-lysyl-[protein] + (6S)-5,6,7,8-tetrahydrofolate = N(6)-[(R)-dihydrolipoyl]-L-lysyl-[protein] + (6R)-5,10-methylene-5,6,7,8-tetrahydrofolate + NH4(+). Functionally, the glycine cleavage system catalyzes the degradation of glycine. This chain is Probable aminomethyltransferase, found in Pyrococcus abyssi (strain GE5 / Orsay).